The primary structure comprises 86 residues: Putative regulatory protein OB1501 (86 aa).

It belongs to the RemA family.

The polypeptide is Putative regulatory protein OB1501 (Oceanobacillus iheyensis (strain DSM 14371 / CIP 107618 / JCM 11309 / KCTC 3954 / HTE831)).